Consider the following 377-residue polypeptide: Beta sliding clamp (377 aa).

This sequence belongs to the beta sliding clamp family. In terms of assembly, forms a ring-shaped head-to-tail homodimer around DNA which binds and tethers DNA polymerases and other proteins to the DNA. The DNA replisome complex has a single clamp-loading complex (3 tau and 1 each of delta, delta', psi and chi subunits) which binds 3 Pol III cores (1 core on the leading strand and 2 on the lagging strand) each with a beta sliding clamp dimer. Additional proteins in the replisome are other copies of gamma, psi and chi, Ssb, DNA helicase and RNA primase.

The protein resides in the cytoplasm. Its function is as follows. Confers DNA tethering and processivity to DNA polymerases and other proteins. Acts as a clamp, forming a ring around DNA (a reaction catalyzed by the clamp-loading complex) which diffuses in an ATP-independent manner freely and bidirectionally along dsDNA. Initially characterized for its ability to contact the catalytic subunit of DNA polymerase III (Pol III), a complex, multichain enzyme responsible for most of the replicative synthesis in bacteria; Pol III exhibits 3'-5' exonuclease proofreading activity. The beta chain is required for initiation of replication as well as for processivity of DNA replication. This chain is Beta sliding clamp (dnaN), found in Staphylococcus aureus (strain COL).